The sequence spans 202 residues: Orotate phosphoribosyltransferase (202 aa).

5-phospho-alpha-D-ribose 1-diphosphate is bound by residues Lys-93 and 113–121; that span reads EDIITTGGS. Residues Thr-117 and Arg-145 each contribute to the orotate site.

This sequence belongs to the purine/pyrimidine phosphoribosyltransferase family. PyrE subfamily. As to quaternary structure, homodimer. The cofactor is Mg(2+).

It carries out the reaction orotidine 5'-phosphate + diphosphate = orotate + 5-phospho-alpha-D-ribose 1-diphosphate. It participates in pyrimidine metabolism; UMP biosynthesis via de novo pathway; UMP from orotate: step 1/2. Functionally, catalyzes the transfer of a ribosyl phosphate group from 5-phosphoribose 1-diphosphate to orotate, leading to the formation of orotidine monophosphate (OMP). The protein is Orotate phosphoribosyltransferase of Campylobacter jejuni subsp. doylei (strain ATCC BAA-1458 / RM4099 / 269.97).